Consider the following 7067-residue polypeptide: Replicase polyprotein 1ab (7067 aa).

The CoV Nsp1 globular domain maps to Thr12–Gly127. Residues Glu148 to Gly179 form the BetaCoV Nsp1 C-terminal domain. The CoV Nsp2 N-terminal domain maps to Thr183 to Arg456. Cys200, Cys231, His234, His236, Cys323, Cys326, Cys341, Cys344, Cys370, Cys373, His382, and Cys416 together coordinate Zn(2+). Positions Cys200–His236 are C2H2. The tract at residues Cys323–Cys344 is C4. The segment at Cys370 to Cys416 is C2HC. One can recognise a CoV Nsp2 middle domain in the interval Arg458–Met688. The CoV Nsp2 C-terminal domain occupies Leu690 to Gly818. The 109-residue stretch at Lys822–Glu930 folds into the Ubiquitin-like 1 domain. Macro domains lie at Val998–Leu1164, Lys1201–Glu1329, and Val1337–Ser1464. One can recognise a DPUP domain in the interval Thr1466–Ser1532. In terms of domain architecture, Ubiquitin-like 2 spans Val1536–Val1591. The Peptidase C16 domain maps to Tyr1605 to Gly1869. The active-site For PL-PRO activity is Cys1645. Zn(2+) is bound by residues Cys1723, Cys1726, Cys1758, and Cys1760. The segment at Cys1723–Cys1760 adopts a C4-type zinc-finger fold. Catalysis depends on for PL-PRO activity residues His1806 and Asp1820. The Nucleic acid-binding domain occupies Pro1882–Thr1992. The G2M domain maps to Thr2017–Asn2126. The HD1 stretch occupies residues Leu2086–Trp2365. Residues Leu2197–Val2217 form a helical membrane-spanning segment. The 71-residue stretch at Thr2218–Asp2288 folds into the 3Ecto domain. 2 disulfides stabilise this stretch: Cys2234/Cys2262 and Cys2253/Cys2259. The next 2 membrane-spanning stretches (helical) occupy residues Trp2298–Met2318 and Met2345–Trp2365. The tract at residues Lys2366–Asp2456 is Y1. The CoV Nsp3 Y domain occupies Lys2366–Gly2734. Residues His2370, Cys2375, Cys2380, Cys2383, Cys2416, His2419, Cys2423, and Cys2426 each contribute to the Zn(2+) site. The ZF1 stretch occupies residues His2370–Cys2383. The tract at residues Cys2416–Cys2426 is ZF2. Residues Gln2457–Val2551 are Y2. Residues Gln2457–Gly2734 are coV-Y. The interval Gly2552–Asp2633 is Y3. Residues Ile2634 to Gly2734 form a Y4 region. Transmembrane regions (helical) follow at residues Leu2744–Val2764, Pro2986–Val3006, Ala3016–Met3036, Val3048–Ala3068, Phe3071–Val3091, Trp3099–Ile3119, and Val3136–Leu3156. The HD2 stretch occupies residues Leu2749–Leu3156. Residues Val3136–Gln3234 form the Nsp4C domain. Residues Ser3235 to Gln3540 enclose the Peptidase C30 domain. Active-site for 3CL-PRO activity residues include His3275 and Cys3379. A run of 7 helical transmembrane segments spans residues Phe3558 to Tyr3578, Asn3580 to Val3600, Phe3606 to Met3626, Asp3652 to Tyr3672, Val3679 to Leu3698, Ile3722 to Ile3742, and Ile3750 to Leu3770. Positions Phe3558–Leu3770 are HD3. The 83-residue stretch at Ser3831–Gln3913 folds into the RdRp Nsp7 cofactor domain. The RdRp Nsp8 cofactor domain maps to Ala3914–Gln4111. A Nsp9 ssRNA-binding domain is found at Asn4112–Gln4224. In terms of domain architecture, ExoN/MTase coactivator spans Ala4225–Gln4363. 8 residues coordinate Zn(2+): Cys4298, Cys4301, His4307, Cys4314, Cys4341, Cys4344, Cys4352, and Cys4354. Zinc fingers lie at residues Cys4298 to Cys4314 and Cys4341 to Cys4354. Residues Phe4370–Leu4624 form the NiRAN domain. Positions 4572 and 4581 each coordinate Mn(2+). The region spanning Val4629–Ser4727 is the Nsp12 Interface domain. Zn(2+) is bound by residues His4658, Cys4664, Cys4669, Cys4673, and Cys4850. Residues Arg4728–Gln5295 form the Nsp12 RNA-dependent RNA polymerase domain. The rdRp Fingers N-ter stretch occupies residues Ser4730–Ala4944. The segment at Thr4945–Pro4983 is rdRp Palm N-ter. The region spanning Pro4975–Gly5137 is the RdRp catalytic domain. The segment at Lys4984–Gly5042 is rdRp Fingers C-ter. Residues His5005, Cys5008, and Cys5009 each contribute to the Zn(2+) site. A rdRp Palm C-ter region spans residues Thr5043–Gln5178. Residues Ser5122, Asp5123, and Asp5124 contribute to the active site. Positions His5179–Gln5295 are rdRp Thumb. The 113-residue stretch at Ala5296–Asp5408 folds into the CV ZBD domain. Residues Cys5300, Cys5303, Cys5311, Cys5314, Cys5321, Cys5324, His5328, His5334, Cys5345, Cys5350, Cys5367, and His5370 each coordinate Zn(2+). Residues Asn5552 to Leu5733 enclose the (+)RNA virus helicase ATP-binding domain. Gly5577–Ser5584 is an ATP binding site. One can recognise a (+)RNA virus helicase C-terminal domain in the interval Gly5734–Leu5903. Positions Met5968–Val6183 constitute an ExoN domain. Active-site residues include Asp5986, Glu5988, and Glu6087. Cys6103, Cys6106, Cys6122, His6125, His6153, Cys6157, and His6160 together coordinate Zn(2+). Active-site residues include His6164 and Asp6169. Cys6175 lines the Zn(2+) pocket. In terms of domain architecture, N7-MTase spans Tyr6192–Gln6423. An S-adenosyl-L-methionine-binding site is contributed by Asp6227 to Ala6233. Residues Cys6310 to Thr6324 are gpppA-binding. Zn(2+) is bound by residues Cys6348, Cys6369, Cys6380, and His6383. Residues Ser6424–Arg6484 form the Nsp15 N-terminal oligomerization domain. The AV-Nsp11N/CoV-Nsp15M domain occupies Asn6485–Gln6610. The NendoU domain maps to Lys6627–Pro6766. Catalysis depends on residues His6657, His6672, Lys6712, Lys6815, Asp6899, Lys6939, and Glu6972. The Nidovirus-type SAM-dependent 2'-O-MTase domain maps to Ser6771 to Val7065.

The protein belongs to the coronaviruses polyprotein 1ab family. As to quaternary structure, interacts with host PHB and PHB2. In terms of assembly, interacts with papain-like protease nsp3 and non-structural protein 6. Monomer. Homodimer. Only the homodimer shows catalytic activity. As to quaternary structure, interacts with nsp8 and nsp12 to form the replication-transcription complex (RTC): nsp12, nsp7, two subunits of nsp8, and up to two subunits of nsp13. In terms of assembly, interacts with nsp7, nsp13 and nsp12 to form the replication-transcription complex (RTC): nsp12, nsp7, two subunits of nsp8, and up to two subunits of nsp13. Interacts with nsp12. As to quaternary structure, interacts with proofreading exoribonuclease nsp14 and 2'-O-methyltransferase nsp16; these interactions enhance nsp14 and nsp16 enzymatic activities. In terms of assembly, interacts with nsp7 and nsp8 to form the replication-transcription complex (RTC): nsp12, nsp7, two subunits of nsp8, and up to two subunits of nsp13. Interacts with nsp9. Interacts with nsp8 to form the replication-transcription complex (RTC): nsp12, nsp7, two subunits of nsp8, and up to two subunits of nsp13. The cofactor is Mn(2+). Requires Mg(2+) as cofactor. Specific enzymatic cleavages in vivo by its own proteases yield mature proteins. 3CL-PRO and PL-PRO proteinases are autocatalytically processed.

The protein resides in the host membrane. It localises to the host cytoplasm. Its subcellular location is the host perinuclear region. The protein localises to the host endoplasmic reticulum-Golgi intermediate compartment. It catalyses the reaction RNA(n) + a ribonucleoside 5'-triphosphate = RNA(n+1) + diphosphate. It carries out the reaction ATP + H2O = ADP + phosphate + H(+). The enzyme catalyses Thiol-dependent hydrolysis of ester, thioester, amide, peptide and isopeptide bonds formed by the C-terminal Gly of ubiquitin (a 76-residue protein attached to proteins as an intracellular targeting signal).. The catalysed reaction is a 5'-end (N(7)-methyl 5'-triphosphoguanosine)-ribonucleoside in mRNA + S-adenosyl-L-methionine = a 5'-end (N(7)-methyl 5'-triphosphoguanosine)-(2'-O-methyl-ribonucleoside) in mRNA + S-adenosyl-L-homocysteine + H(+). It catalyses the reaction uridylyl-uridylyl-ribonucleotide-RNA = a 3'-end uridylyl-2',3'-cyclophospho-uridine-RNA + a 5'-end dephospho-ribonucleoside-RNA. It carries out the reaction a 5'-end diphospho-ribonucleoside in mRNA + GTP + H(+) = a 5'-end (5'-triphosphoguanosine)-ribonucleoside in mRNA + diphosphate. The enzyme catalyses a 5'-end (5'-triphosphoguanosine)-ribonucleoside in mRNA + S-adenosyl-L-methionine = a 5'-end (N(7)-methyl 5'-triphosphoguanosine)-ribonucleoside in mRNA + S-adenosyl-L-homocysteine. Its function is as follows. The replicase polyprotein of coronaviruses is a multifunctional protein: it contains the activities necessary for the transcription of negative stranded RNA, leader RNA, subgenomic mRNAs and progeny virion RNA as well as proteinases responsible for the cleavage of the polyprotein into functional products. Functionally, inhibits host translation by interacting with the 40S ribosomal subunit. The nsp1-40S ribosome complex further induces an endonucleolytic cleavage near the 5'UTR of host mRNAs, targeting them for degradation. Viral mRNAs are not susceptible to nsp1-mediated endonucleolytic RNA cleavage thanks to the presence of a 5'-end leader sequence and are therefore protected from degradation. By suppressing host gene expression, nsp1 facilitates efficient viral gene expression in infected cells and evasion from host immune response. May play a role in the modulation of host cell survival signaling pathway by interacting with host PHB and PHB2. Indeed, these two proteins play a role in maintaining the functional integrity of the mitochondria and protecting cells from various stresses. In terms of biological role, responsible for the cleavages located at the N-terminus of the replicase polyprotein. In addition, PL-PRO possesses a deubiquitinating/deISGylating activity and processes both 'Lys-48'- and 'Lys-63'-linked polyubiquitin chains from cellular substrates. Participates together with nsp4 in the assembly of virally-induced cytoplasmic double-membrane vesicles necessary for viral replication. Antagonizes innate immune induction of type I interferon by blocking the phosphorylation, dimerization and subsequent nuclear translocation of host IRF3. Also prevents host NF-kappa-B signaling. Its function is as follows. Participates in the assembly of virally-induced cytoplasmic double-membrane vesicles necessary for viral replication. Functionally, cleaves the C-terminus of replicase polyprotein at 11 sites. Recognizes substrates containing the core sequence [ILMVF]-Q-|-[SGACN]. Also able to bind an ADP-ribose-1''-phosphate (ADRP). Plays a role in the initial induction of autophagosomes from host endoplasmic reticulum. Later, limits the expansion of these phagosomes that are no longer able to deliver viral components to lysosomes. In terms of biological role, forms a hexadecamer with nsp8 (8 subunits of each) that may participate in viral replication by acting as a primase. Alternatively, may synthesize substantially longer products than oligonucleotide primers. Its function is as follows. Forms a hexadecamer with nsp7 (8 subunits of each) that may participate in viral replication by acting as a primase. Alternatively, may synthesize substantially longer products than oligonucleotide primers. Functionally, forms a primer, NSP9-pU, which is utilized by the polymerase for the initiation of RNA chains. Interacts with ribosome signal recognition particle RNA (SRP). Together with NSP8, suppress protein integration into the cell membrane, thereby disrupting host immune defenses. Plays a pivotal role in viral transcription by stimulating both nsp14 3'-5' exoribonuclease and nsp16 2'-O-methyltransferase activities. Therefore plays an essential role in viral mRNAs cap methylation. In terms of biological role, RNA-directed RNA polymerase that catalyzes the transcription of viral genomic and subgenomic RNAs. Acts in complex with nsp7 and nsp8 to transcribe both the minus and positive strands of genomic RNA. The kinase-like NiRAN domain of NSP12 attaches one or more nucleotides to the amino terminus of NSP9, forming a covalent RNA-protein intermediate that serves as transcription/replication primer. Subgenomic RNAs (sgRNAs) are formed by discontinuous transcription: The polymerase has the ability to pause at transcription-regulating sequences (TRS) and jump to the leader TRS, resulting in a major deletion. This creates a series of subgenomic RNAs that are replicated, transcribed and translated. In addition, Nsp12 is a subunit of the viral RNA capping enzyme that catalyzes the RNA guanylyltransferase reaction for genomic and sub-genomic RNAs. Subsequently, the NiRAN domain transfers RNA to GDP, and forms the core cap structure GpppA-RNA. Its function is as follows. Multi-functional protein with a zinc-binding domain in N-terminus displaying RNA and DNA duplex-unwinding activities with 5' to 3' polarity. Activity of helicase is dependent on magnesium. Functionally, plays a role in viral RNA synthesis through two distinct activities. The N7-guanine methyltransferase activity plays a role in the formation of the cap structure GpppA-RNA. The proofreading exoribonuclease reduces the sensitivity of the virus to RNA mutagens during replication. This activity acts on both ssRNA and dsRNA in a 3'-5' direction. Plays a role in viral transcription/replication and prevents the simultaneous activation of host cell dsRNA sensors, such as MDA5/IFIH1, OAS, and PKR. Acts by degrading the 5'-polyuridines generated during replication of the poly(A) region of viral genomic and subgenomic RNAs. Catalyzes a two-step reaction in which a 2'3'-cyclic phosphate (2'3'-cP) is first generated by 2'-O transesterification, which is then hydrolyzed to a 3'-phosphate (3'-P). If not degraded, poly(U) RNA would hybridize with poly(A) RNA tails and activate host dsRNA sensors. In terms of biological role, methyltransferase that mediates mRNA cap 2'-O-ribose methylation to the 5'-cap structure of viral mRNAs. N7-methyl guanosine cap is a prerequisite for binding of nsp16. Therefore plays an essential role in viral mRNAs cap methylation which is essential to evade immune system. The chain is Replicase polyprotein 1ab (rep) from Bat coronavirus HKU3 (BtCoV).